A 193-amino-acid polypeptide reads, in one-letter code: Major intrinsically disordered NOTCH2-binding receptor 1-like homolog (193 aa).

Residue S82 is modified to Phosphoserine. A glycan (N-linked (GlcNAc...) asparagine) is linked at N128. Residues 172–192 form a helical membrane-spanning segment; the sequence is GLILLLVASILVTIVTLSTIF.

This sequence belongs to the MINAR family. Interacts with NOTCH2. Widely expressed in the cortex and Purkinje cells of cerebellum. Expressed in the inner ear, mainly in the hair cells, spiral ganglia, the spiral limbus, and the stria vascularis.

The protein resides in the lysosome membrane. Its subcellular location is the endoplasmic reticulum membrane. Functionally, binds cholesterol and may regulate the distribution and homeostasis of cholesterol in hair cells. May play a role in angiogenesis. This Mus musculus (Mouse) protein is Major intrinsically disordered NOTCH2-binding receptor 1-like homolog.